The sequence spans 410 residues: MLPADVANRHSCEKNLYVGACKLTLPMKQLWWAVYIIDTVLVIPFAIFFYESDQEKTVTQRVKNALLWVVILLTVFCLLLGILYAVIGYADFTMRSLSSTTMAFINDFSSLNAKASCLVSAGFSLFSNVTLMVSLFFYIFPFFIDLTTLCDSVQLICLDLWLKLSVTYVITLNTIIGSILFMMFGGVGMATLPLSLIFAFKNRPKCVITRAQYVKEATDLAKRSNELKTATLGLQREERGGKKGRMFRKNVKKVQQELVFLEDDVEALNEAFPQGEKTLTVLFYLAKLVFGIVGLALSIIWLLHIIVFMLVNPPAFPFLNQVFIQLDTVGGLLGTTTFAIFCYYLVMSVISGKMHLGMRLLFLSIHPMKYQGTLDPMWHENVIASGAQPSSAMDSSSWSADRPCRPWPWP.

The next 5 membrane-spanning stretches (helical) occupy residues 30–50, 67–87, 129–149, 156–176, and 179–199; these read LWWA…IFFY, LWVV…YAVI, VTLM…LTTL, ICLD…NTII, and ILFM…LIFA. The stretch at 245–274 forms a coiled coil; that stretch reads RMFRKNVKKVQQELVFLEDDVEALNEAFPQ. 2 helical membrane-spanning segments follow: residues 288 to 308 and 330 to 350; these read LVFG…IIVF and GGLL…MSVI. Low complexity predominate over residues 389-400; the sequence is PSSAMDSSSWSA. The disordered stretch occupies residues 389-410; that stretch reads PSSAMDSSSWSADRPCRPWPWP.

The protein belongs to the LIMR family.

It localises to the membrane. In Selaginella moellendorffii (Spikemoss), this protein is LIMR family protein SELMODRAFT_432208.